We begin with the raw amino-acid sequence, 421 residues long: C2H2 type master regulator of conidiophore development brlA (421 aa).

Residues 228–242 (THSPTTPLRSCSIGT) are compositionally biased toward polar residues. The tract at residues 228-247 (THSPTTPLRSCSIGTASGPD) is disordered. 2 consecutive C2H2-type zinc fingers follow at residues 309-333 (FKCK…MKSH) and 339-364 (HVCW…TKTH). The span at 361–370 (TKTHSKRGGR) shows a compositional bias: basic residues. The tract at residues 361-421 (TKTHSKRGGR…REYSVDGLDD (61 aa)) is disordered.

It localises to the nucleus. Its function is as follows. BrlA, abaA and wetA are pivotal regulators of conidiophore development and conidium maturation. They act individually and together to regulate their own expression and that of numerous other sporulation-specific genes. Binds promoters of target genes at brlA response elements (BREs) containing the conserved sequence 5'-(C/A)(A/G)AGGG(G/A)-3'. This is C2H2 type master regulator of conidiophore development brlA from Aspergillus parasiticus (strain ATCC 56775 / NRRL 5862 / SRRC 143 / SU-1).